Reading from the N-terminus, the 272-residue chain is Plastid division protein PDV1 (272 aa).

The Cytoplasmic segment spans residues 1–206 (MGEMEIEEIE…KRALGFNHVK (206 aa)). Residues 40–61 (KPSNRSEKRKNPHGNSGEDKRP) form a disordered region. Residues 78–102 (IQEAKSLNAIRTALENLEDQLEFFH) are a coiled coil. The helical transmembrane segment at 207–225 (GVLGNAAIFAISVVAMLHL) threads the bilayer. The Chloroplast intermembrane portion of the chain corresponds to 226-272 (HQVATSEHHLQKKEDRFYRSQQRKTYGRDKSSADRSLDHLDVMMARG).

In terms of assembly, interacts (via C-terminus) with CDP1/PARC6 (via C-terminus). Interacts with ARC5/DRP5B. As to expression, expressed in young developing leaves, root tips, shoot apices, and flower buds (sepals, petals, stamens, and pistils), but not in developed tissues.

It localises to the plastid. The protein resides in the chloroplast outer membrane. In terms of biological role, component of the plastid division machinery. Required to mediate the dissociation of ARC5/DRP5B from plastid outer envelope membranes (OEMs) at the midplastid constriction site in the cytoplasm, thus triggering ARC5/DRP5B ring turnover at the chloroplast division site. Binding to phosphatidylinositol 4-phosphate (PI4P) modulates negatively chloroplast division. This chain is Plastid division protein PDV1, found in Arabidopsis thaliana (Mouse-ear cress).